A 199-amino-acid polypeptide reads, in one-letter code: ATP-dependent Clp protease proteolytic subunit (199 aa).

Serine 99 functions as the Nucleophile in the catalytic mechanism. Residue histidine 124 is part of the active site.

It belongs to the peptidase S14 family. In terms of assembly, fourteen ClpP subunits assemble into 2 heptameric rings which stack back to back to give a disk-like structure with a central cavity, resembling the structure of eukaryotic proteasomes.

The protein localises to the cytoplasm. It carries out the reaction Hydrolysis of proteins to small peptides in the presence of ATP and magnesium. alpha-casein is the usual test substrate. In the absence of ATP, only oligopeptides shorter than five residues are hydrolyzed (such as succinyl-Leu-Tyr-|-NHMec, and Leu-Tyr-Leu-|-Tyr-Trp, in which cleavage of the -Tyr-|-Leu- and -Tyr-|-Trp bonds also occurs).. Its function is as follows. Cleaves peptides in various proteins in a process that requires ATP hydrolysis. Has a chymotrypsin-like activity. Plays a major role in the degradation of misfolded proteins. The polypeptide is ATP-dependent Clp protease proteolytic subunit (Lactococcus lactis subsp. cremoris (strain SK11)).